The following is a 151-amino-acid chain: MSRVQLALRVPDLEASIGFYSKLFGTGPAKVRPGYANFAIAEPPLKLVLIEGAGEDATRLDHLGVEVEDSAQVGHAARRLKESGLATVEENDTACCYAVQDKVWVTGPGGEPWEVYVVKGDADTLAKADDSACCTPRDSGSAGAAVGADCC.

The VOC domain maps to Ser2–Val118. Gln5 contacts Fe(2+). Asp61 provides a ligand contact to roxarsone (III). His62 contributes to the Fe(2+) binding site. Roxarsone (III) contacts are provided by Cys95 and Cys96. Glu114 lines the Fe(2+) pocket.

In terms of assembly, monomer. Requires Fe(2+) as cofactor.

The catalysed reaction is methylarsonous acid + AH2 + O2 = arsenite + methanol + A + H(+). It carries out the reaction roxarsone (III) + AH2 + O2 = 4-hydroxy-3-nitrocyclohexa-2,5-dien-1-one + arsenite + A + H(+). The enzyme catalyses nitarsone (III) + AH2 + O2 = 4-nitrocyclohexa-2,5-dien-1-one + arsenite + A + H(+). It catalyses the reaction 4-aminophenylarsonous acid + AH2 + O2 = 4-aminocyclohexa-2,5-dien-1-one + arsenite + A. In terms of biological role, nonheme iron-dependent dioxygenase that can break carbon-arsenic bonds, playing a role in the detoxification of environmental organoarsenical compounds. Catalyzes the oxygen-dependent demethylation of highly toxic methylarsonous acid (MAs(III)) to arsenite, which can then be exported out of the cell. Can also cleave the C-As bond in several trivalent aromatic arsenicals, including roxarsone (III), nitarsone (III) and (4-aminophenyl)arsonous acid. Organoarsenical degradation by this enzyme is proposed to have a significant impact on the arsenic biogeocycle that maintains a balance between organic and inorganic species. The chain is Trivalent organoarsenical cleaving enzyme from Thermomonospora curvata (strain ATCC 19995 / DSM 43183 / JCM 3096 / KCTC 9072 / NBRC 15933 / NCIMB 10081 / Henssen B9).